The following is a 360-amino-acid chain: Nucleoporin SEH1-A (360 aa).

WD repeat units lie at residues D10–C49, T55–K96, D111–Q152, S160–A210, S217–S258, and N276–C315.

Belongs to the WD repeat SEC13 family. As to quaternary structure, component of the Nup107-160 subcomplex of the nuclear pore complex (NPC). The Nup107-160 subcomplex includes NUP160, NUP133, NUP107, NUP98, NUP85, NUP43, NUP37, SEH1 and SEC13. Component of the GATOR2 subcomplex, composed of MIOS, SEC13, SEH1L, WDR24 and WDR59. The GATOR2 complex interacts with CASTOR1 and CASTOR2; the interaction is negatively regulated by arginine. The GATOR2 complex interacts with SESN1, SESN2 and SESN3; the interaction is negatively regulated by amino acids.

The protein resides in the chromosome. It is found in the centromere. The protein localises to the kinetochore. Its subcellular location is the nucleus. It localises to the nuclear pore complex. The protein resides in the lysosome membrane. The GATOR2 complex is negatively regulated by the upstream amino acid sensors CASTOR1 and SESN2, which sequester the GATOR2 complex in absence of amino acids. In the presence of abundant amino acids, GATOR2 is released from CASTOR1 and SESN2 and activated. In terms of biological role, component of the Nup107-160 subcomplex of the nuclear pore complex (NPC). The Nup107-160 subcomplex is required for the assembly of a functional NPC. The Nup107-160 subcomplex is also required for normal kinetochore microtubule attachment, mitotic progression and chromosome segregation. This subunit plays a role in recruitment of the Nup107-160 subcomplex to the kinetochore. As a component of the GATOR2 complex, functions as an activator of the amino acid-sensing branch of the mTORC1 signaling pathway. The GATOR2 complex indirectly activates mTORC1 through the inhibition of the GATOR1 subcomplex. GATOR2 probably acts as an E3 ubiquitin-protein ligase toward GATOR1. In the presence of abundant amino acids, the GATOR2 complex mediates ubiquitination of the NPRL2 core component of the GATOR1 complex, leading to GATOR1 inactivation. In the absence of amino acids, GATOR2 is inhibited, activating the GATOR1 complex. In Xenopus laevis (African clawed frog), this protein is Nucleoporin SEH1-A (seh1l-a).